Consider the following 350-residue polypeptide: Protein RecA (350 aa).

65–72 lines the ATP pocket; sequence GPESSGKT. Positions 329 to 350 are disordered; sequence ASPDVKANPVKETEDDMADADI. A compositionally biased stretch (acidic residues) spans 341-350; that stretch reads TEDDMADADI.

It belongs to the RecA family.

Its subcellular location is the cytoplasm. Its function is as follows. Can catalyze the hydrolysis of ATP in the presence of single-stranded DNA, the ATP-dependent uptake of single-stranded DNA by duplex DNA, and the ATP-dependent hybridization of homologous single-stranded DNAs. It interacts with LexA causing its activation and leading to its autocatalytic cleavage. The chain is Protein RecA from Pseudomonas fluorescens (strain ATCC BAA-477 / NRRL B-23932 / Pf-5).